The following is a 251-amino-acid chain: Segregation and condensation protein A (251 aa).

Belongs to the ScpA family. In terms of assembly, component of a cohesin-like complex composed of ScpA, ScpB and the Smc homodimer, in which ScpA and ScpB bind to the head domain of Smc. The presence of the three proteins is required for the association of the complex with DNA.

It is found in the cytoplasm. Functionally, participates in chromosomal partition during cell division. May act via the formation of a condensin-like complex containing Smc and ScpB that pull DNA away from mid-cell into both cell halves. The polypeptide is Segregation and condensation protein A (Exiguobacterium sibiricum (strain DSM 17290 / CCUG 55495 / CIP 109462 / JCM 13490 / 255-15)).